An 85-amino-acid chain; its full sequence is Large ribosomal subunit protein bL27 (85 aa).

The protein belongs to the bacterial ribosomal protein bL27 family.

In Campylobacter hominis (strain ATCC BAA-381 / DSM 21671 / CCUG 45161 / LMG 19568 / NCTC 13146 / CH001A), this protein is Large ribosomal subunit protein bL27.